Reading from the N-terminus, the 287-residue chain is MRIIVITGMSGSGKSTAVRALEDEGFYCIDNLPMRLFRPFVELIEKSGDSYRGIVLVADIRGREFLKGFENTFQTLRDQGHGVEIFFIDASDDVLIRRFSETRRRHPAEEQCTVSEGIRIERERLSTLRQMATRIIDSSDFNVHQLKELILRIVRGEDAETPMVIEIKSFGFRYGIPLESSIVMDVRFLPNPFFVPRLKPGSGLDDEVREYILDNPKTATFLDCFFPMLDMLVPAHRQEGKYYLTISIGCTGGRHRSVAIAEATAMYLRADWPTVRITHRDIEKGQQ.

ATP is bound at residue 8 to 15 (GMSGSGKS). 59 to 62 (DIRG) serves as a coordination point for GTP.

This sequence belongs to the RapZ-like family.

Displays ATPase and GTPase activities. This Pelobacter propionicus (strain DSM 2379 / NBRC 103807 / OttBd1) protein is Nucleotide-binding protein Ppro_0977.